We begin with the raw amino-acid sequence, 131 residues long: Profilin-1 (131 aa).

Belongs to the profilin family. In terms of assembly, occurs in many kinds of cells as a complex with monomeric actin in a 1:1 ratio.

Its subcellular location is the cytoplasm. It localises to the cytoskeleton. Binds to actin and affects the structure of the cytoskeleton. At high concentrations, profilin prevents the polymerization of actin, whereas it enhances it at low concentrations. By binding to PIP2, it inhibits the formation of IP3 and DG. The chain is Profilin-1 (PRO1) from Triticum aestivum (Wheat).